A 258-amino-acid polypeptide reads, in one-letter code: NAD(P)H-hydrate epimerase (258 aa).

The YjeF N-terminal domain maps to 15–244; the sequence is AFQLDQELMS…RIAKEYGIED (230 aa). A (6S)-NADPHX-binding site is contributed by 75-79; the sequence is NNGGD. Asn-76 and Asp-145 together coordinate K(+). (6S)-NADPHX is bound by residues 149–155 and Asp-181; that span reads GFSFKPP. K(+) is bound at residue Ser-184.

Belongs to the NnrE/AIBP family. K(+) is required as a cofactor.

Its subcellular location is the cytoplasm. The protein localises to the mitochondrion. It carries out the reaction (6R)-NADHX = (6S)-NADHX. It catalyses the reaction (6R)-NADPHX = (6S)-NADPHX. Catalyzes the epimerization of the S- and R-forms of NAD(P)HX, a damaged form of NAD(P)H that is a result of enzymatic or heat-dependent hydration. This is a prerequisite for the S-specific NAD(P)H-hydrate dehydratase to allow the repair of both epimers of NAD(P)HX. This is NAD(P)H-hydrate epimerase from Candida albicans (strain SC5314 / ATCC MYA-2876) (Yeast).